We begin with the raw amino-acid sequence, 5162 residues long: Linear gramicidin synthase subunit B (5162 aa).

4 Carrier domains span residues 963–1038, 2027–2101, 3541–3616, and 4601–4675; these read APRN…QALR, EPQS…VVLE, APRN…GAIG, and AATS…GQST. O-(pantetheine 4'-phosphoryl)serine is present on residues S998, S2062, S3576, and S4636.

This sequence belongs to the ATP-dependent AMP-binding enzyme family. As to quaternary structure, large multienzyme complex composed of 4 subunits; LgrA, LgrB, LgrC and LgrD. It depends on pantetheine 4'-phosphate as a cofactor.

Activates the 3rd to 6th amino acids (Ala, D-Leu, Ala and D-Val) in linear gramicidin and catalyzes the formation of the peptide bond between them. This enzyme is also responsible for the epimerization of the 4th (D-Leu) and the 6th (D-Val) amino acids. The polypeptide is Linear gramicidin synthase subunit B (lgrB) (Brevibacillus parabrevis).